We begin with the raw amino-acid sequence, 87 residues long: Small ribosomal subunit protein bS20 (87 aa).

The protein belongs to the bacterial ribosomal protein bS20 family.

Binds directly to 16S ribosomal RNA. This chain is Small ribosomal subunit protein bS20, found in Nitrosomonas europaea (strain ATCC 19718 / CIP 103999 / KCTC 2705 / NBRC 14298).